Reading from the N-terminus, the 504-residue chain is Maturase K (504 aa).

Belongs to the intron maturase 2 family. MatK subfamily.

The protein resides in the plastid. It is found in the chloroplast. Usually encoded in the trnK tRNA gene intron. Probably assists in splicing its own and other chloroplast group II introns. The chain is Maturase K from Lupinus argenteus (Silvery lupine).